The sequence spans 113 residues: Neocarzinostatin (113 aa).

Cystine bridges form between Cys-37–Cys-47 and Cys-88–Cys-93.

It belongs to the neocarzinostatin family.

NCS has antibiotic activity (for Gram-positive bacteria) and antitumor activity (for certain mouse tumors). NCS binds non-covalently to a chromophore which is the cytotoxic and mutagenic component of the antibiotic. The chromophore binds to DNA as a weak intercalator and causes single- and double-strand breaks. The sequence is that of Neocarzinostatin (ncsA) from Streptomyces malayensis.